The sequence spans 157 residues: 2-C-methyl-D-erythritol 2,4-cyclodiphosphate synthase (157 aa).

Residues Asp-8 and His-10 each contribute to the a divalent metal cation site. Residues Asp-8–His-10 and His-34–Ser-35 contribute to the 4-CDP-2-C-methyl-D-erythritol 2-phosphate site. His-42 lines the a divalent metal cation pocket. 4-CDP-2-C-methyl-D-erythritol 2-phosphate is bound by residues Asp-56 to Gly-58, Phe-61 to Asp-65, Ala-100 to Ala-106, Thr-132 to Glu-135, Phe-139, and Arg-142.

This sequence belongs to the IspF family. In terms of assembly, homotrimer. Requires a divalent metal cation as cofactor.

The catalysed reaction is 4-CDP-2-C-methyl-D-erythritol 2-phosphate = 2-C-methyl-D-erythritol 2,4-cyclic diphosphate + CMP. It functions in the pathway isoprenoid biosynthesis; isopentenyl diphosphate biosynthesis via DXP pathway; isopentenyl diphosphate from 1-deoxy-D-xylulose 5-phosphate: step 4/6. Its function is as follows. Involved in the biosynthesis of isopentenyl diphosphate (IPP) and dimethylallyl diphosphate (DMAPP), two major building blocks of isoprenoid compounds. Catalyzes the conversion of 4-diphosphocytidyl-2-C-methyl-D-erythritol 2-phosphate (CDP-ME2P) to 2-C-methyl-D-erythritol 2,4-cyclodiphosphate (ME-CPP) with a corresponding release of cytidine 5-monophosphate (CMP). The polypeptide is 2-C-methyl-D-erythritol 2,4-cyclodiphosphate synthase (Pseudomonas syringae pv. tomato (strain ATCC BAA-871 / DC3000)).